Reading from the N-terminus, the 1476-residue chain is Glucosyltransferase-I (1476 aa).

The N-terminal stretch at 1 to 34 (MDKKVRYKLRKVKKRWVTVSVASAVMTLTTLSGG) is a signal peptide. 2 disordered regions span residues 42 to 89 (ESKS…ISSS) and 102 to 141 (PYTVGETASNGEKLQNQTTTVDKTSEAAANNISKQTTEAD). Composition is skewed to polar residues over residues 43 to 81 (SKSQISNDSNTSVVTANEESNVTTEVTSKQEAASSQTNH) and 102 to 139 (PYTVGETASNGEKLQNQTTTVDKTSEAAANNISKQTTE). Cell wall-binding repeat units lie at residues 159-178 (LPNVKEIDGKYYYYDNNGKV) and 179-199 (RTNFTLIADGKILHFDETGAY). Residues 200–1051 (TDTSIDTVNK…NTYFNISDNK (852 aa)) are catalytic; approximate. Cell wall-binding repeat units lie at residues 1087 to 1106 (KNTFISEGDKWYYFDNNGYM), 1107 to 1126 (VTGAQSINGVNYYFLSNGLQ), 1170 to 1189 (SVGLTVIDGQVQYFDEMGYQ), 1214 to 1234 (RNRFIENEEGKWLYLGEDGAA), 1235 to 1254 (VTGSQTINGQHLYFRANGVQ), 1279 to 1299 (RNRFVRNAQGQWFYFDNNGYA), 1300 to 1319 (VTGARTINGQHLYFRANGVQ), 1344 to 1364 (RNRFVRNAQGQWFYFDNNGYA), 1365 to 1384 (VTGARTINGQHLYFRANGVQ), 1409 to 1429 (RNRFVRNAQGQWFYFDNNGYA), and 1430 to 1449 (VTGARTINGQHLYFRANGVQ).

The protein belongs to the glycosyl hydrolase 70 family.

The protein localises to the secreted. The enzyme catalyses [(1-&gt;6)-alpha-D-glucosyl](n) + sucrose = [(1-&gt;6)-alpha-D-glucosyl](n+1) + D-fructose. In terms of biological role, production of extracellular glucans, that are thought to play a key role in the development of the dental plaque because of their ability to adhere to smooth surfaces and mediate the aggregation of bacterial cells and food debris. The chain is Glucosyltransferase-I (gtfB) from Streptococcus mutans serotype c (strain ATCC 700610 / UA159).